A 476-amino-acid chain; its full sequence is Glycogen synthase (476 aa).

Lys-15 is an ADP-alpha-D-glucose binding site.

Belongs to the glycosyltransferase 1 family. Bacterial/plant glycogen synthase subfamily.

It carries out the reaction [(1-&gt;4)-alpha-D-glucosyl](n) + ADP-alpha-D-glucose = [(1-&gt;4)-alpha-D-glucosyl](n+1) + ADP + H(+). It participates in glycan biosynthesis; glycogen biosynthesis. Functionally, synthesizes alpha-1,4-glucan chains using ADP-glucose. The polypeptide is Glycogen synthase (Yersinia pseudotuberculosis serotype O:1b (strain IP 31758)).